The following is a 312-amino-acid chain: Ribosomal protein L11 methyltransferase (312 aa).

Residues Thr-162, Gly-183, Asp-205, and Asn-248 each contribute to the S-adenosyl-L-methionine site.

It belongs to the methyltransferase superfamily. PrmA family.

Its subcellular location is the cytoplasm. It catalyses the reaction L-lysyl-[protein] + 3 S-adenosyl-L-methionine = N(6),N(6),N(6)-trimethyl-L-lysyl-[protein] + 3 S-adenosyl-L-homocysteine + 3 H(+). Methylates ribosomal protein L11. This chain is Ribosomal protein L11 methyltransferase, found in Bacillus cytotoxicus (strain DSM 22905 / CIP 110041 / 391-98 / NVH 391-98).